The primary structure comprises 501 residues: ATP synthase subunit alpha (501 aa).

169-176 (GDRQTGKT) is an ATP binding site.

It belongs to the ATPase alpha/beta chains family. F-type ATPases have 2 components, CF(1) - the catalytic core - and CF(0) - the membrane proton channel. CF(1) has five subunits: alpha(3), beta(3), gamma(1), delta(1), epsilon(1). CF(0) has three main subunits: a(1), b(2) and c(9-12). The alpha and beta chains form an alternating ring which encloses part of the gamma chain. CF(1) is attached to CF(0) by a central stalk formed by the gamma and epsilon chains, while a peripheral stalk is formed by the delta and b chains.

The protein localises to the cell membrane. It carries out the reaction ATP + H2O + 4 H(+)(in) = ADP + phosphate + 5 H(+)(out). Functionally, produces ATP from ADP in the presence of a proton gradient across the membrane. The alpha chain is a regulatory subunit. In Streptococcus pneumoniae serotype 4 (strain ATCC BAA-334 / TIGR4), this protein is ATP synthase subunit alpha.